A 342-amino-acid chain; its full sequence is Serpentine receptor class beta-16 (342 aa).

The Extracellular segment spans residues 1-22 (MDRELIEICKENSATAFSVGYQ). Residues 23 to 43 (IVYLIYVVLSVTSIFTCSYFI) traverse the membrane as a helical segment. Residues 44–61 (KTFIWNSTFHPNFKLLLT) lie on the Cytoplasmic side of the membrane. Residues 62 to 82 (MYFFAAIFHSFLFTASYLMMI) form a helical membrane-spanning segment. Topologically, residues 83 to 102 (ERFLDYQTDCDIHVSMVPYA) are extracellular. The chain crosses the membrane as a helical span at residues 103-123 (IVHSSIACCLFCGMLTQVFMV). Residues 124–141 (IERLLATIKIESYEHNTS) are Cytoplasmic-facing. A helical transmembrane segment spans residues 142–162 (FWHILAYLFFCIVLPLSLLVW). Residues 163-187 (AYQDADYNSPVITAISPPKGVEIRL) are Extracellular-facing. A helical transmembrane segment spans residues 188 to 208 (NILYIFCFFLAILALILLQVV). Over 209–237 (RFVNKRRESRIEISLSGRFQIVENIDTTT) the chain is Cytoplasmic. Residues 238–258 (FISSILIINMIMSVIYIVGTF) form a helical membrane-spanning segment. Topologically, residues 259-274 (TLRNFQFDAFINNQPA) are extracellular. The helical transmembrane segment at 275–295 (LATVKTIFYLHPLFSFLMPLI) threads the bilayer. The Cytoplasmic segment spans residues 296 to 342 (SSYHLSKMRERRVKRREHLMAIKTKGREGSDAYNQLLHDQWTQHFLK).

It belongs to the nematode receptor-like protein srb family. In terms of tissue distribution, expressed throughout the nervous system, in pharyngeal muscle, hermaphrodite vulval muscles and in the male tail. Not expressed in male somatic gonads or sperm.

Its subcellular location is the cell membrane. It localises to the perikaryon. The protein localises to the cell projection. The protein resides in the dendrite. Its function is as follows. G-protein coupled receptor. Plays a role in the navigational capacity of sperm and promotes the targeting of sperm derived from males to the fertilization site in the uterus of hermaphrodites. This Caenorhabditis elegans protein is Serpentine receptor class beta-16.